Reading from the N-terminus, the 355-residue chain is Protein pelota homolog (355 aa).

This sequence belongs to the eukaryotic release factor 1 family. Pelota subfamily. Monomer. Requires a divalent metal cation as cofactor.

It is found in the cytoplasm. May function in recognizing stalled ribosomes, interact with stem-loop structures in stalled mRNA molecules, and effect endonucleolytic cleavage of the mRNA. May play a role in the release non-functional ribosomes and degradation of damaged mRNAs. Has endoribonuclease activity. The sequence is that of Protein pelota homolog from Natronomonas pharaonis (strain ATCC 35678 / DSM 2160 / CIP 103997 / JCM 8858 / NBRC 14720 / NCIMB 2260 / Gabara) (Halobacterium pharaonis).